Reading from the N-terminus, the 545-residue chain is CTP synthase (545 aa).

The interval 1–266 (MKTNYIFVTG…DDYICKRFSL (266 aa)) is amidoligase domain. Ser14 is a CTP binding site. Ser14 is a binding site for UTP. ATP-binding positions include 15-20 (SLGKGI) and Asp72. Residues Asp72 and Glu140 each contribute to the Mg(2+) site. Residues 147 to 149 (DIE), 187 to 192 (KTKPTQ), and Lys223 each bind CTP. Residues 187 to 192 (KTKPTQ) and Lys223 contribute to the UTP site. 239-241 (KDV) provides a ligand contact to ATP. In terms of domain architecture, Glutamine amidotransferase type-1 spans 291–542 (TIGMVGKYVE…VKAAFDYQKG (252 aa)). Gly352 is an L-glutamine binding site. Residue Cys379 is the Nucleophile; for glutamine hydrolysis of the active site. Residues 380 to 383 (LGMQ), Glu403, and Arg470 each bind L-glutamine. Residues His515 and Glu517 contribute to the active site.

The protein belongs to the CTP synthase family. Homotetramer.

The catalysed reaction is UTP + L-glutamine + ATP + H2O = CTP + L-glutamate + ADP + phosphate + 2 H(+). The enzyme catalyses L-glutamine + H2O = L-glutamate + NH4(+). It carries out the reaction UTP + NH4(+) + ATP = CTP + ADP + phosphate + 2 H(+). The protein operates within pyrimidine metabolism; CTP biosynthesis via de novo pathway; CTP from UDP: step 2/2. With respect to regulation, allosterically activated by GTP, when glutamine is the substrate; GTP has no effect on the reaction when ammonia is the substrate. The allosteric effector GTP functions by stabilizing the protein conformation that binds the tetrahedral intermediate(s) formed during glutamine hydrolysis. Inhibited by the product CTP, via allosteric rather than competitive inhibition. Catalyzes the ATP-dependent amination of UTP to CTP with either L-glutamine or ammonia as the source of nitrogen. Regulates intracellular CTP levels through interactions with the four ribonucleotide triphosphates. This is CTP synthase from Proteus mirabilis (strain HI4320).